Here is a 239-residue protein sequence, read N- to C-terminus: Ribosomal RNA small subunit methyltransferase G (239 aa).

S-adenosyl-L-methionine is bound by residues glycine 77, phenylalanine 82, 128–129 (AE), and arginine 147. Residues 216–239 (EKKKQTPKKYPRKPGTPNKSPIEG) form a disordered region.

It belongs to the methyltransferase superfamily. RNA methyltransferase RsmG family.

The protein resides in the cytoplasm. Functionally, specifically methylates the N7 position of guanine in position 535 of 16S rRNA. The chain is Ribosomal RNA small subunit methyltransferase G from Bacillus pumilus (strain SAFR-032).